The sequence spans 93 residues: Small ribosomal subunit protein uS19 (93 aa).

Belongs to the universal ribosomal protein uS19 family.

Protein S19 forms a complex with S13 that binds strongly to the 16S ribosomal RNA. This Ruminiclostridium cellulolyticum (strain ATCC 35319 / DSM 5812 / JCM 6584 / H10) (Clostridium cellulolyticum) protein is Small ribosomal subunit protein uS19.